Consider the following 137-residue polypeptide: Large ribosomal subunit protein uL16 (137 aa).

This sequence belongs to the universal ribosomal protein uL16 family. Part of the 50S ribosomal subunit.

Its function is as follows. Binds 23S rRNA and is also seen to make contacts with the A and possibly P site tRNAs. This is Large ribosomal subunit protein uL16 from Streptococcus suis (strain 98HAH33).